The sequence spans 273 residues: Ribosomal RNA small subunit methyltransferase A (273 aa).

The S-adenosyl-L-methionine site is built by N18, L20, G45, E66, D91, and N113.

The protein belongs to the class I-like SAM-binding methyltransferase superfamily. rRNA adenine N(6)-methyltransferase family. RsmA subfamily.

It localises to the cytoplasm. It carries out the reaction adenosine(1518)/adenosine(1519) in 16S rRNA + 4 S-adenosyl-L-methionine = N(6)-dimethyladenosine(1518)/N(6)-dimethyladenosine(1519) in 16S rRNA + 4 S-adenosyl-L-homocysteine + 4 H(+). Specifically dimethylates two adjacent adenosines (A1518 and A1519) in the loop of a conserved hairpin near the 3'-end of 16S rRNA in the 30S particle. May play a critical role in biogenesis of 30S subunits. The polypeptide is Ribosomal RNA small subunit methyltransferase A (Escherichia coli O1:K1 / APEC).